Reading from the N-terminus, the 338-residue chain is Phytanoyl-CoA dioxygenase, peroxisomal (338 aa).

The N-terminal 30 residues, 1–30 (MEQLRAAARLQIVLGHLGRPSAGAVVAHPT), are a transit peptide targeting the peroxisome. Lys59 and Lys108 each carry N6-succinyllysine. Residues Lys120, Met157, 175–177 (HQD), and Trp193 each bind 2-oxoglutarate. Fe cation contacts are provided by His175 and Asp177. Lys231 and Lys252 each carry N6-succinyllysine. His264 contacts Fe cation. 2-oxoglutarate-binding residues include Ser266 and Arg275. The residue at position 317 (Ser317) is a Phosphoserine.

It belongs to the PhyH family. As to quaternary structure, interacts with FKBP52. Interacts with PHYHIP. Requires Fe cation as cofactor. L-ascorbate serves as cofactor. ATP is required as a cofactor. The cofactor is Mg(2+). As to expression, expressed in liver, kidney, and T-cells, but not in spleen, brain, heart, lung and skeletal muscle.

The protein resides in the peroxisome. It catalyses the reaction phytanoyl-CoA + 2-oxoglutarate + O2 = 2-hydroxyphytanoyl-CoA + succinate + CO2. It carries out the reaction 3-methylhexadecanoyl-CoA + 2-oxoglutarate + O2 = 2-hydroxy-3-methylhexadecanoyl-CoA + succinate + CO2. The enzyme catalyses hexadecanoyl-CoA + 2-oxoglutarate + O2 = 2-hydroxyhexadecanoyl-CoA + succinate + CO2. The catalysed reaction is octanoyl-CoA + 2-oxoglutarate + O2 = 2-hydroxyoctanoyl-CoA + succinate + CO2. It catalyses the reaction decanoyl-CoA + 2-oxoglutarate + O2 = 2-hydroxydecanoyl-CoA + succinate + CO2. It carries out the reaction 3-methylbutanoyl-CoA + 2-oxoglutarate + O2 = 2-hydroxy-3-methylbutanoyl-CoA + succinate + CO2. The enzyme catalyses heptadecanoyl-CoA + 2-oxoglutarate + O2 = 2-hydroxyheptadecanoyl-CoA + succinate + CO2. The catalysed reaction is eicosanoyl-CoA + 2-oxoglutarate + O2 = 2-hydroxyeicosanoyl-CoA + succinate + CO2. It catalyses the reaction octadecanoyl-CoA + 2-oxoglutarate + O2 = 2-hydroxyoctadecanoyl-CoA + succinate + CO2. It carries out the reaction dodecanoyl-CoA + 2-oxoglutarate + O2 = 2-hydroxydodecanoyl-CoA + succinate + CO2. The enzyme catalyses tetradecanoyl-CoA + 2-oxoglutarate + O2 = 2-hydroxytetradecanoyl-CoA + succinate + CO2. The catalysed reaction is hexanoyl-CoA + 2-oxoglutarate + O2 = 2-hydroxyhexanoyl-CoA + succinate + CO2. It catalyses the reaction butanoyl-CoA + 2-oxoglutarate + O2 = 2-hydroxybutanoyl-CoA + succinate + CO2. It carries out the reaction 3-methylnonanoyl-CoA + 2-oxoglutarate + O2 = 2-hydroxy-3-methylnonanoyl-CoA + succinate + CO2. The enzyme catalyses 3-methylundecanoyl-CoA + 2-oxoglutarate + O2 = 2-hydroxy-3-methylundecanoyl-CoA + succinate + CO2. The catalysed reaction is 3-methyldodecanoyl-CoA + 2-oxoglutarate + O2 = 2-hydroxy-3-methyldodecanoyl-CoA + succinate + CO2. The protein operates within lipid metabolism; fatty acid metabolism. Its function is as follows. Catalyzes the 2-hydroxylation of not only racemic phytanoyl-CoA and the isomers of 3-methylhexadecanoyl-CoA, but also a variety of other mono-branched 3-methylacyl-CoA esters (with a chain length of at least seven carbon atoms) and straight-chain acyl-CoA esters (with a chain length longer than four carbon atoms). Does not hydroxylate long and very long straight chain acyl-CoAs or 2-methyl- and 4-methyl-branched acyl-CoAs. The polypeptide is Phytanoyl-CoA dioxygenase, peroxisomal (PHYH) (Homo sapiens (Human)).